The primary structure comprises 204 residues: Ancillary SecYEG translocon subunit (204 aa).

Topologically, residues 1–23 are cytoplasmic; the sequence is MAYSIEEEQEINQLKDWWKENGK. A helical transmembrane segment spans residues 24-42; the sequence is TIIVAFILGVGGMFGWRYW. The Periplasmic segment spans residues 43-204; it reads QTHQAEQIAQ…QMAKMKLNNL (162 aa).

It belongs to the YfgM family. As to quaternary structure, interacts with the SecYEG translocon. Forms a complex with PpiD.

The protein localises to the cell inner membrane. May mediate protein transfer from the SecYEG translocon to the periplasmic chaperone network via its periplasmic C-terminal region. This is Ancillary SecYEG translocon subunit from Haemophilus influenzae (strain ATCC 51907 / DSM 11121 / KW20 / Rd).